The primary structure comprises 283 residues: Heavy metal-associated isoprenylated plant protein 3 (283 aa).

Residues 1–22 (MGEKKNEGDNKKKGGDNKKKNE) are compositionally biased toward basic and acidic residues. A disordered region spans residues 1-26 (MGEKKNEGDNKKKGGDNKKKNETPSI). HMA domains follow at residues 25 to 88 (SITV…KKKV) and 132 to 195 (VTTA…KRAV). Positions 36 and 39 each coordinate Zn(2+). Residues 82–129 (EKTKKKVDLVSPQPKKEKEKENKNKNDEDKKKSEEKKKPDNNDKKPKE) show a composition bias toward basic and acidic residues. The tract at residues 82 to 131 (EKTKKKVDLVSPQPKKEKEKENKNKNDEDKKKSEEKKKPDNNDKKPKETP) is disordered. Zn(2+) contacts are provided by Cys-143 and Cys-146. The span at 198 to 230 (VPPKKEKDKENGNENGEKKKGGGGDGGGKEKTG) shows a compositional bias: basic and acidic residues. The segment at 198 to 238 (VPPKKEKDKENGNENGEKKKGGGGDGGGKEKTGNKGGGEGV) is disordered. Position 280 is a cysteine methyl ester (Cys-280). Residue Cys-280 is the site of S-farnesyl cysteine attachment. Residues 281–283 (VVM) constitute a propeptide, removed in mature form.

It belongs to the HIPP family.

The protein resides in the nucleus. It is found in the nucleolus. It localises to the cytoplasm. In terms of biological role, heavy-metal-binding protein. Binds high amounts of zinc. May act as an upstream regulator of the salicylate-dependent pathogen response. Involved in abiotic stress responses, and seed and flower development. The protein is Heavy metal-associated isoprenylated plant protein 3 of Arabidopsis thaliana (Mouse-ear cress).